The sequence spans 163 residues: uncharacterized protein (163 aa).

A disordered region spans residues proline 128–valine 163. A compositionally biased stretch (basic residues) spans lysine 129–valine 163.

This is an uncharacterized protein from Sulfurisphaera tokodaii (strain DSM 16993 / JCM 10545 / NBRC 100140 / 7) (Sulfolobus tokodaii).